The sequence spans 347 residues: Protein-glutamate methylesterase/protein-glutamine glutaminase 1 (347 aa).

Residues 6-123 (RVLVVDDSAT…LRPFGDLAEK (118 aa)) form the Response regulatory domain. At Asp-57 the chain carries 4-aspartylphosphate. Residues 150–342 (FRVGRKIVAI…EEILKMTAAR (193 aa)) enclose the CheB-type methylesterase domain. Residues Ser-162, His-188, and Asp-284 contribute to the active site.

The protein belongs to the CheB family. In terms of processing, phosphorylated by CheA. Phosphorylation of the N-terminal regulatory domain activates the methylesterase activity.

It is found in the cytoplasm. It carries out the reaction [protein]-L-glutamate 5-O-methyl ester + H2O = L-glutamyl-[protein] + methanol + H(+). It catalyses the reaction L-glutaminyl-[protein] + H2O = L-glutamyl-[protein] + NH4(+). Involved in chemotaxis. Part of a chemotaxis signal transduction system that modulates chemotaxis in response to various stimuli. Catalyzes the demethylation of specific methylglutamate residues introduced into the chemoreceptors (methyl-accepting chemotaxis proteins or MCP) by CheR. Also mediates the irreversible deamidation of specific glutamine residues to glutamic acid. The chain is Protein-glutamate methylesterase/protein-glutamine glutaminase 1 from Rhizobium johnstonii (strain DSM 114642 / LMG 32736 / 3841) (Rhizobium leguminosarum bv. viciae).